Here is a 305-residue protein sequence, read N- to C-terminus: Autophagy-related protein 14 (305 aa).

A coiled-coil region spans residues K34–R147.

This sequence belongs to the ATG14 family. As to quaternary structure, component of the autophagy-specific VPS34 PI3-kinase complex I.

The protein localises to the preautophagosomal structure membrane. It is found in the vacuole membrane. Required for cytoplasm to vacuole transport (Cvt) and autophagy as a part of the autophagy-specific VPS34 PI3-kinase complex I. This complex is essential to recruit the ATG8-phosphatidylinositol conjugate and the ATG12-ATG5 conjugate to the pre-autophagosomal structure. ATG14 mediates the specific binding of the VPS34 PI3-kinase complex I to the preautophagosomal structure (PAS). This is Autophagy-related protein 14 from Kluyveromyces marxianus (strain DMKU3-1042 / BCC 29191 / NBRC 104275) (Yeast).